Here is a 166-residue protein sequence, read N- to C-terminus: Large ribosomal subunit protein uL10 (166 aa).

It belongs to the universal ribosomal protein uL10 family. As to quaternary structure, part of the ribosomal stalk of the 50S ribosomal subunit. The N-terminus interacts with L11 and the large rRNA to form the base of the stalk. The C-terminus forms an elongated spine to which L12 dimers bind in a sequential fashion forming a multimeric L10(L12)X complex.

Functionally, forms part of the ribosomal stalk, playing a central role in the interaction of the ribosome with GTP-bound translation factors. This Hydrogenovibrio crunogenus (strain DSM 25203 / XCL-2) (Thiomicrospira crunogena) protein is Large ribosomal subunit protein uL10.